A 201-amino-acid polypeptide reads, in one-letter code: Casparian strip membrane protein 2 (201 aa).

Topologically, residues 1 to 38 (MKSTGEATAINIGETKSASATTVATTKAIQHPKAGLKR) are cytoplasmic. Residues 39-59 (GLAIFDFILRLSAIGAALAAT) form a helical membrane-spanning segment. The Extracellular portion of the chain corresponds to 60–89 (TTMGTTDQTLPFFTQFFQFQASYDDLPAFS). The chain crosses the membrane as a helical span at residues 90-110 (FFVIANAIASGYLFLSLPFSI). Topologically, residues 111–129 (VCIVRPHAMGARLLLVICD) are cytoplasmic. The helical transmembrane segment at 130-150 (TVMVALTIAAAAAAAAIVYLA) threads the bilayer. Residues 151–175 (HNGNSNANWVAICQQFDDFCQSVSG) are Extracellular-facing. A helical membrane pass occupies residues 176–196 (AVVASFIAAVLFMLMIVLSAF). At 197 to 201 (SLRKH) the chain is on the cytoplasmic side.

This sequence belongs to the Casparian strip membrane proteins (CASP) family. In terms of assembly, homodimer and heterodimers.

It is found in the cell membrane. In terms of biological role, regulates membrane-cell wall junctions and localized cell wall deposition. Required for establishment of the Casparian strip membrane domain (CSD) and the subsequent formation of Casparian strips, a cell wall modification of the root endodermis that determines an apoplastic barrier between the intraorganismal apoplasm and the extraorganismal apoplasm and prevents lateral diffusion. This is Casparian strip membrane protein 2 from Vitis vinifera (Grape).